Here is a 236-residue protein sequence, read N- to C-terminus: Potassium/proton antiporter CemA (236 aa).

4 consecutive transmembrane segments (helical) span residues 18-38, 114-134, 161-181, and 196-216; these read YIIS…FLVL, IAHV…LINA, LILF…KILI, and FIFL…KYWI.

This sequence belongs to the CemA family.

It is found in the plastid. The protein localises to the chloroplast inner membrane. It catalyses the reaction K(+)(in) + H(+)(out) = K(+)(out) + H(+)(in). Contributes to K(+)/H(+) antiport activity by supporting proton efflux to control proton extrusion and homeostasis in chloroplasts in a light-dependent manner to modulate photosynthesis. Prevents excessive induction of non-photochemical quenching (NPQ) under continuous-light conditions. Indirectly promotes efficient inorganic carbon uptake into chloroplasts. The protein is Potassium/proton antiporter CemA of Mesostigma viride (Green alga).